The chain runs to 99 residues: uncharacterized protein (99 aa).

Positions 1–19 (MLGMIRWVVEGTLVAMLLS) are cleaved as a signal peptide. Residues 71-99 (DGFGRINDSGPKRRGRDQSQYSSRFVELD) are disordered.

The protein resides in the cytoplasm. This is an uncharacterized protein from Saccharomyces cerevisiae (strain ATCC 204508 / S288c) (Baker's yeast).